The sequence spans 80 residues: Acyl carrier protein (80 aa).

The 76-residue stretch at 4 to 79 (NSIEEKVRSI…DVVAYIEKVQ (76 aa)) folds into the Carrier domain. S39 is subject to O-(pantetheine 4'-phosphoryl)serine.

It belongs to the acyl carrier protein (ACP) family. 4'-phosphopantetheine is transferred from CoA to a specific serine of apo-ACP by AcpS. This modification is essential for activity because fatty acids are bound in thioester linkage to the sulfhydryl of the prosthetic group.

Its subcellular location is the cytoplasm. Its pathway is lipid metabolism; fatty acid biosynthesis. Its function is as follows. Carrier of the growing fatty acid chain in fatty acid biosynthesis. In Akkermansia muciniphila (strain ATCC BAA-835 / DSM 22959 / JCM 33894 / BCRC 81048 / CCUG 64013 / CIP 107961 / Muc), this protein is Acyl carrier protein.